The following is a 336-amino-acid chain: tRNA (guanine(10)-N2)-dimethyltransferase (336 aa).

The region spanning 50–147 (KILKKRLAYA…NDRFILTRRL (98 aa)) is the THUMP domain.

The protein belongs to the methyltransferase superfamily. Trm-G10 family. In terms of assembly, monomer.

The protein resides in the cytoplasm. The catalysed reaction is guanosine(10) in tRNA + 2 S-adenosyl-L-methionine = N(2)-dimethylguanosine(10) in tRNA + 2 S-adenosyl-L-homocysteine + 2 H(+). Catalyzes the adenosylmethionine-dependent methylation of the exocyclic amino group (N(2)) of guanosine at position 10 of various tRNAs. Acts via a two-step process that leads to the formation of either N(2)-monomethyl (m(2)G) or N(2)-dimethylguanosine (m(2)(2)G). The polypeptide is tRNA (guanine(10)-N2)-dimethyltransferase (trmG10) (Methanothermobacter thermautotrophicus (strain ATCC 29096 / DSM 1053 / JCM 10044 / NBRC 100330 / Delta H) (Methanobacterium thermoautotrophicum)).